The sequence spans 426 residues: Serine--tRNA ligase (426 aa).

An L-serine-binding site is contributed by 229 to 231 (TAE). Residues 260 to 262 (RTE) and V276 each bind ATP. Residue E283 coordinates L-serine. 350–353 (EVTS) is an ATP binding site. T386 is a binding site for L-serine.

The protein belongs to the class-II aminoacyl-tRNA synthetase family. Type-1 seryl-tRNA synthetase subfamily. In terms of assembly, homodimer. The tRNA molecule binds across the dimer.

The protein resides in the cytoplasm. The enzyme catalyses tRNA(Ser) + L-serine + ATP = L-seryl-tRNA(Ser) + AMP + diphosphate + H(+). It catalyses the reaction tRNA(Sec) + L-serine + ATP = L-seryl-tRNA(Sec) + AMP + diphosphate + H(+). It functions in the pathway aminoacyl-tRNA biosynthesis; selenocysteinyl-tRNA(Sec) biosynthesis; L-seryl-tRNA(Sec) from L-serine and tRNA(Sec): step 1/1. Catalyzes the attachment of serine to tRNA(Ser). Is also able to aminoacylate tRNA(Sec) with serine, to form the misacylated tRNA L-seryl-tRNA(Sec), which will be further converted into selenocysteinyl-tRNA(Sec). The chain is Serine--tRNA ligase from Rhodopirellula baltica (strain DSM 10527 / NCIMB 13988 / SH1).